Here is a 494-residue protein sequence, read N- to C-terminus: Ketol-acid reductoisomerase (NADP(+)) (494 aa).

In terms of domain architecture, KARI N-terminal Rossmann spans 14 to 208 (LDQLGRCRFM…GGHRAGCLES (195 aa)). Residues 45–48 (CGAQ), arginine 68, arginine 76, serine 78, and 108–110 (DKQ) each bind NADP(+). Histidine 132 is a catalytic residue. Residue glycine 158 participates in NADP(+) binding. KARI C-terminal knotted domains follow at residues 209-344 (SFVA…NYPE) and 345-487 (TDVE…MTDM). The Mg(2+) site is built by aspartate 217, glutamate 221, glutamate 389, and glutamate 393. Position 414 (serine 414) interacts with substrate.

It belongs to the ketol-acid reductoisomerase family. Mg(2+) is required as a cofactor.

The enzyme catalyses (2R)-2,3-dihydroxy-3-methylbutanoate + NADP(+) = (2S)-2-acetolactate + NADPH + H(+). It catalyses the reaction (2R,3R)-2,3-dihydroxy-3-methylpentanoate + NADP(+) = (S)-2-ethyl-2-hydroxy-3-oxobutanoate + NADPH + H(+). It participates in amino-acid biosynthesis; L-isoleucine biosynthesis; L-isoleucine from 2-oxobutanoate: step 2/4. The protein operates within amino-acid biosynthesis; L-valine biosynthesis; L-valine from pyruvate: step 2/4. Functionally, involved in the biosynthesis of branched-chain amino acids (BCAA). Catalyzes an alkyl-migration followed by a ketol-acid reduction of (S)-2-acetolactate (S2AL) to yield (R)-2,3-dihydroxy-isovalerate. In the isomerase reaction, S2AL is rearranged via a Mg-dependent methyl migration to produce 3-hydroxy-3-methyl-2-ketobutyrate (HMKB). In the reductase reaction, this 2-ketoacid undergoes a metal-dependent reduction by NADPH to yield (R)-2,3-dihydroxy-isovalerate. This chain is Ketol-acid reductoisomerase (NADP(+)), found in Vibrio parahaemolyticus serotype O3:K6 (strain RIMD 2210633).